Here is a 79-residue protein sequence, read N- to C-terminus: Small ribosomal subunit protein bS16c (79 aa).

It belongs to the bacterial ribosomal protein bS16 family.

The protein localises to the plastid. It is found in the chloroplast. The protein is Small ribosomal subunit protein bS16c of Trieres chinensis (Marine centric diatom).